The primary structure comprises 25 residues: TDPGHLQDVXVAINDPKXGVFVNRK.

It belongs to the germin family. As to quaternary structure, oligomer (believed to be a pentamer but probably hexamer). Post-translationally, the three different mass spectrometry results appear to arise from different glycosylation variants.

It localises to the secreted. Its subcellular location is the extracellular space. It is found in the apoplast. May play a role in plant defense. Probably has no oxalate oxidase activity even if the active site is conserved. This Citrus sinensis (Sweet orange) protein is Germin-like protein.